Consider the following 441-residue polypeptide: Velvet complex subunit B (441 aa).

Residues 1–173 (MSTLGQGDFE…SDQGVRLRLR (173 aa)) form the Velvet domain. Disordered stretches follow at residues 200–220 (GYLPHDANHDLSPNGHSPHHL), 234–295 (RSRS…ETDT), and 341–396 (MPSP…PSYA). 2 stretches are compositionally biased toward low complexity: residues 272–283 (DGASPDSPHPSS) and 361–375 (PAGAPGSASSAFSPG).

Belongs to the velvet family. VelB subfamily. In terms of assembly, component of the heterotrimeric velvet complex composed of laeA, veA and velB; VeA acting as a bridging protein between laeA and velB.

The protein localises to the nucleus. Its subcellular location is the cytoplasm. Component of the velvet transcription factor complex that controls sexual/asexual developmental ratio in response to light, promoting sexual development in the darkness while stimulating asexual sporulation under illumination. The velvet complex acts as a global regulator for secondary metabolite gene expression and is required for the production of chaetoglobosin A. This chain is Velvet complex subunit B, found in Chaetomium globosum (strain ATCC 6205 / CBS 148.51 / DSM 1962 / NBRC 6347 / NRRL 1970) (Soil fungus).